A 250-amino-acid chain; its full sequence is Osmotin-like protein OSML15 (250 aa).

The signal sequence occupies residues 1–21; that stretch reads MSHLTTCLVFFLLAFVTYTNA. Disulfide bonds link Cys31-Cys226, Cys73-Cys83, Cys88-Cys94, Cys142-Cys214, Cys147-Cys197, Cys155-Cys165, Cys169-Cys178, and Cys179-Cys184.

This sequence belongs to the thaumatin family.

The chain is Osmotin-like protein OSML15 from Solanum commersonii (Commerson's wild potato).